A 439-amino-acid polypeptide reads, in one-letter code: Trigger factor (439 aa).

A PPIase FKBP-type domain is found at 163-248 (GDRVTIDYRG…LNKLEAPKLP (86 aa)).

The protein belongs to the FKBP-type PPIase family. Tig subfamily.

It is found in the cytoplasm. It carries out the reaction [protein]-peptidylproline (omega=180) = [protein]-peptidylproline (omega=0). Its function is as follows. Involved in protein export. Acts as a chaperone by maintaining the newly synthesized protein in an open conformation. Functions as a peptidyl-prolyl cis-trans isomerase. This is Trigger factor from Nitrosomonas europaea (strain ATCC 19718 / CIP 103999 / KCTC 2705 / NBRC 14298).